A 514-amino-acid polypeptide reads, in one-letter code: 1-pyrroline-5-carboxylate dehydrogenase (514 aa).

Residues glutamate 286 and cysteine 320 contribute to the active site.

The protein belongs to the aldehyde dehydrogenase family. RocA subfamily.

The enzyme catalyses L-glutamate 5-semialdehyde + NAD(+) + H2O = L-glutamate + NADH + 2 H(+). The protein operates within amino-acid degradation; L-proline degradation into L-glutamate; L-glutamate from L-proline: step 2/2. The protein is 1-pyrroline-5-carboxylate dehydrogenase of Staphylococcus aureus (strain MRSA252).